Consider the following 128-residue polypeptide: Entry-fusion complex protein OPG094 (128 aa).

The Intravirion portion of the chain corresponds to 1–30 (MENVPNVYFNPVFIEPTFKHSLLSVYKHRL). A helical; Signal-anchor for type III membrane protein membrane pass occupies residues 31–51 (IVLFEVFIVFILIYVFFRSEL). Residues 52 to 107 (NMFFMPKRKIPDPIDRLRRANLACEDDKLMIYGLPWMTTQTSALSINSKPIVYKDC) are Virion surface-facing. Residues cysteine 75 and cysteine 107 are joined by a disulfide bond.

The protein belongs to the orthopoxvirus OPG099 family. In terms of assembly, interacts with OPG086. Component of the entry fusion complex (EFC) composed of OPG053, OPG076, OPG086, OPG094, OPG095, OPG099, OPG107, OPG143, OPG104J5, OPG147 and OPG155. Except for OPG095 and OPG053, each of the EFC proteins is required for assembly or stability of the complex. Post-translationally, most cysteines are linked by disulfide bonds. They are created by the viral disulfide bond formation pathway, a poxvirus-specific redox pathway that operates on the cytoplasmic side of the MV membranes. Unglycosylated because produced in viral factories instead of the classic ER -Golgi route.

Its subcellular location is the virion membrane. Component of the entry fusion complex (EFC), which consists of 11 proteins. During cell infection, this complex mediates entry of the virion core into the host cytoplasm by a two-step mechanism consisting of lipid mixing of the viral and cellular membranes and subsequent pore formation. The sequence is that of Entry-fusion complex protein OPG094 (OPG099) from Vaccinia virus (strain Ankara) (VACV).